Here is a 326-residue protein sequence, read N- to C-terminus: Thiamine thiazole synthase (326 aa).

Residues cysteine 87, 108–109, glycine 116, and valine 181 each bind substrate; that span reads EA. Cysteine 215 carries the 2,3-didehydroalanine (Cys) modification. Residues aspartate 217, histidine 232, methionine 284, and 294–296 contribute to the substrate site; that span reads RMG.

Belongs to the THI4 family. In terms of assembly, homooctamer. Requires Fe cation as cofactor. In terms of processing, during the catalytic reaction, a sulfide is transferred from Cys-215 to a reaction intermediate, generating a dehydroalanine residue.

The protein localises to the cytoplasm. Its subcellular location is the nucleus. It carries out the reaction [ADP-thiazole synthase]-L-cysteine + glycine + NAD(+) = [ADP-thiazole synthase]-dehydroalanine + ADP-5-ethyl-4-methylthiazole-2-carboxylate + nicotinamide + 3 H2O + 2 H(+). In terms of biological role, involved in biosynthesis of the thiamine precursor thiazole. Catalyzes the conversion of NAD and glycine to adenosine diphosphate 5-(2-hydroxyethyl)-4-methylthiazole-2-carboxylic acid (ADT), an adenylated thiazole intermediate. The reaction includes an iron-dependent sulfide transfer from a conserved cysteine residue of the protein to a thiazole intermediate. The enzyme can only undergo a single turnover, which suggests it is a suicide enzyme. May have additional roles in adaptation to various stress conditions and in DNA damage tolerance. The polypeptide is Thiamine thiazole synthase (Sclerotinia sclerotiorum (strain ATCC 18683 / 1980 / Ss-1) (White mold)).